Reading from the N-terminus, the 234-residue chain is Endonuclease V (234 aa).

Mg(2+) contacts are provided by D36 and D104.

Belongs to the endonuclease V family. Requires Mg(2+) as cofactor.

The protein resides in the cytoplasm. It carries out the reaction Endonucleolytic cleavage at apurinic or apyrimidinic sites to products with a 5'-phosphate.. DNA repair enzyme involved in the repair of deaminated bases. Selectively cleaves double-stranded DNA at the second phosphodiester bond 3' to a deoxyinosine leaving behind the intact lesion on the nicked DNA. This Yersinia enterocolitica serotype O:8 / biotype 1B (strain NCTC 13174 / 8081) protein is Endonuclease V.